A 428-amino-acid polypeptide reads, in one-letter code: Glycine reductase complex component B subunits alpha and beta (428 aa).

Cys-242 functions as the Schiff-base intermediate with substrate; via pyruvic acid in the catalytic mechanism. A Pyruvic acid (Cys) modification is found at Cys-242.

Heterohexamer of two alpha, two beta and two gamma subunits. Component of the glycine reductase complex, together with components A and C. PB is substrate specific. The peptide chain is cleaved into beta and alpha chains, and the alpha chain N-terminal cysteine is deaminated and oxidized to form a reactive pyruvoyl group.

It carries out the reaction acetyl phosphate + [thioredoxin]-disulfide + NH4(+) + H2O = [thioredoxin]-dithiol + glycine + phosphate + H(+). In the first step of glycine reductase, the substrate is bound to component PB via a Schiff base intermediate. Then the PB-activated substrate is nucleophilically attacked by the selenol anion of component PA to transform it to a carboxymethylated selenoether and the respective amine. By action of component PC, acetyl phosphate is formed, leaving component PA in its oxidized state. Finally component PA becomes reduced by the thioredoxin system to start a new catalytic cycle of reductive deamination. The polypeptide is Glycine reductase complex component B subunits alpha and beta (grdE) (Peptoclostridium acidaminophilum (Eubacterium acidaminophilum)).